The sequence spans 320 residues: Malate dehydrogenase (320 aa).

NAD(+) is bound by residues 10–15 (GSGMIG) and aspartate 34. Arginine 83 and arginine 89 together coordinate substrate. NAD(+)-binding positions include asparagine 96 and 119-121 (ITN). Residues asparagine 121 and arginine 152 each contribute to the substrate site. Histidine 176 functions as the Proton acceptor in the catalytic mechanism.

It belongs to the LDH/MDH superfamily. MDH type 3 family.

The catalysed reaction is (S)-malate + NAD(+) = oxaloacetate + NADH + H(+). In terms of biological role, catalyzes the reversible oxidation of malate to oxaloacetate. The sequence is that of Malate dehydrogenase from Maricaulis maris (strain MCS10) (Caulobacter maris).